The following is a 199-amino-acid chain: Dephospho-CoA kinase (199 aa).

One can recognise a DPCK domain in the interval R3–T199. ATP is bound at residue G11 to T16.

This sequence belongs to the CoaE family.

It localises to the cytoplasm. The catalysed reaction is 3'-dephospho-CoA + ATP = ADP + CoA + H(+). Its pathway is cofactor biosynthesis; coenzyme A biosynthesis; CoA from (R)-pantothenate: step 5/5. In terms of biological role, catalyzes the phosphorylation of the 3'-hydroxyl group of dephosphocoenzyme A to form coenzyme A. The protein is Dephospho-CoA kinase of Coxiella burnetii (strain RSA 493 / Nine Mile phase I).